Consider the following 296-residue polypeptide: Probable porphobilinogen deaminase (296 aa).

Cysteine 241 is subject to S-(dipyrrolylmethanemethyl)cysteine.

Belongs to the HMBS family. The cofactor is dipyrromethane.

It carries out the reaction 4 porphobilinogen + H2O = hydroxymethylbilane + 4 NH4(+). It functions in the pathway porphyrin-containing compound metabolism; protoporphyrin-IX biosynthesis; coproporphyrinogen-III from 5-aminolevulinate: step 2/4. Its function is as follows. Tetrapolymerization of the monopyrrole PBG into the hydroxymethylbilane pre-uroporphyrinogen in several discrete steps. The protein is Probable porphobilinogen deaminase of Pyrobaculum calidifontis (strain DSM 21063 / JCM 11548 / VA1).